Reading from the N-terminus, the 269-residue chain is Formamidopyrimidine-DNA glycosylase (269 aa).

Residue Pro2 is the Schiff-base intermediate with DNA of the active site. Glu3 functions as the Proton donor in the catalytic mechanism. Lys57 acts as the Proton donor; for beta-elimination activity in catalysis. The DNA site is built by His90, Arg109, and Lys150. The FPG-type zinc-finger motif lies at 235-269; that stretch reads QVYGRKGEPCRVCGTPIVATKHAQRATFYCRHCQK. Residue Arg259 is the Proton donor; for delta-elimination activity of the active site.

This sequence belongs to the FPG family. As to quaternary structure, monomer. Zn(2+) serves as cofactor.

The catalysed reaction is Hydrolysis of DNA containing ring-opened 7-methylguanine residues, releasing 2,6-diamino-4-hydroxy-5-(N-methyl)formamidopyrimidine.. The enzyme catalyses 2'-deoxyribonucleotide-(2'-deoxyribose 5'-phosphate)-2'-deoxyribonucleotide-DNA = a 3'-end 2'-deoxyribonucleotide-(2,3-dehydro-2,3-deoxyribose 5'-phosphate)-DNA + a 5'-end 5'-phospho-2'-deoxyribonucleoside-DNA + H(+). Involved in base excision repair of DNA damaged by oxidation or by mutagenic agents. Acts as a DNA glycosylase that recognizes and removes damaged bases. Has a preference for oxidized purines, such as 7,8-dihydro-8-oxoguanine (8-oxoG). Has AP (apurinic/apyrimidinic) lyase activity and introduces nicks in the DNA strand. Cleaves the DNA backbone by beta-delta elimination to generate a single-strand break at the site of the removed base with both 3'- and 5'-phosphates. The chain is Formamidopyrimidine-DNA glycosylase from Salmonella paratyphi C (strain RKS4594).